Consider the following 86-residue polypeptide: Neurotoxin E1x (86 aa).

Residues 1-19 form the signal peptide; it reads MNSLLMITACLVVIGTVWA. The region spanning 20–84 is the LCN-type CS-alpha/beta domain; the sequence is KEGYLVDVKG…TWPLPNKTCG (65 aa). 4 disulfide bridges follow: cysteine 30-cysteine 83, cysteine 34-cysteine 59, cysteine 43-cysteine 64, and cysteine 47-cysteine 66. The residue at position 83 (cysteine 83) is a Cysteine amide.

Belongs to the long (4 C-C) scorpion toxin superfamily. Sodium channel inhibitor family. Beta subfamily. In terms of tissue distribution, expressed by the venom gland.

The protein resides in the secreted. Binds to sodium channels (Nav) and inhibits the inactivation of the activated channels, thereby blocking neuronal transmission. The protein is Neurotoxin E1x of Centruroides sculpturatus (Arizona bark scorpion).